The chain runs to 213 residues: MRIILLGAPGSGKGTQAQFIMKKYGIPHISTGDMLRTTVNKESVLGKNIQAIIKLGNLVPDQLVIELVKERIIQYDCSKGFLLDGFPRTLTQAYAMEVAGINVDIVLILRIPDKIIINRIVGRMVHEPSGRIYHVTFNPPKQKGKDDITGENLIIRQDDKEDTVRHRLIGYHQQMIPIITYYNNANIRNIRCFTIDANCPISTLNEKIVRILG.

10–15 (GSGKGT) is a binding site for ATP. Residues 30-59 (STGDMLRTTVNKESVLGKNIQAIIKLGNLV) are NMP. AMP-binding positions include threonine 31, arginine 36, 57–59 (NLV), 85–88 (GFPR), and glutamine 92. The LID stretch occupies residues 122 to 159 (GRMVHEPSGRIYHVTFNPPKQKGKDDITGENLIIRQDD). Residues arginine 123 and 132 to 133 (IY) contribute to the ATP site. Residues arginine 156 and arginine 167 each contribute to the AMP site. Cysteine 199 is a binding site for ATP.

Belongs to the adenylate kinase family. As to quaternary structure, monomer.

It localises to the cytoplasm. The catalysed reaction is AMP + ATP = 2 ADP. It functions in the pathway purine metabolism; AMP biosynthesis via salvage pathway; AMP from ADP: step 1/1. Its function is as follows. Catalyzes the reversible transfer of the terminal phosphate group between ATP and AMP. Plays an important role in cellular energy homeostasis and in adenine nucleotide metabolism. This is Adenylate kinase from Baumannia cicadellinicola subsp. Homalodisca coagulata.